A 165-amino-acid chain; its full sequence is Endoribonuclease YbeY (165 aa).

Zn(2+)-binding residues include His130, His134, and His140.

Belongs to the endoribonuclease YbeY family. Zn(2+) serves as cofactor.

It localises to the cytoplasm. Functionally, single strand-specific metallo-endoribonuclease involved in late-stage 70S ribosome quality control and in maturation of the 3' terminus of the 16S rRNA. This Streptococcus suis (strain 98HAH33) protein is Endoribonuclease YbeY.